We begin with the raw amino-acid sequence, 551 residues long: MAEASFGSSSPVGSLSSEDHDFDPTAEMLVHDYDDERTLEEEELMDDGKNFSSEIEDLEKEGNMPLEDLLAFYGYESTIPAVANSSANSSPSELADELPDMTLDKEEIAKDLLSGDDEETQSSADDLTPSVTSHETSEFFPRPLRSNTTCDGDKESEIEDVETDSGNSPEDLRREIMIGLEYQAEIPPYLGEYNGDDEKAYENEDQLLWHPGVLLESKVKEYLVETSLRTGNEKVLDRISSGTHTRDNEQALYELLKCNHNIKEAIERYCCNGKASQEGMTAWTEEECRSFEHALMLHGKDFHLIQKDKVRSRTVAECVAFYYMWKKSERYDYFAQQTKFGKKRYNHHPGVTDYMDRLVDETESLGGTVSSSALTCNRPEPVPDQPLNILSSFTASDLTALTNSVATVCNPTAVNCLDDSFPPLANTPRGHVNHVPVVTEELLTLPSNGESDCFNLFETGFYHSELNPMCSEESERPAKRLKMGIAVPESFMNEVSVNNLGVDFENHTHHITSAKMAVSVADFGSLSANETNGFINAHSLHQHQHAALHSE.

Over residues 1-16 the composition is skewed to low complexity; the sequence is MAEASFGSSSPVGSLS. Disordered regions lie at residues 1 to 62 and 113 to 169; these read MAEA…EKEG and LSGD…GNSP. A compositionally biased stretch (basic and acidic residues) spans 17–36; that stretch reads SEDHDFDPTAEMLVHDYDDE. Phosphoserine is present on residues serine 52, serine 53, and serine 114. Residues 121–134 are compositionally biased toward polar residues; the sequence is QSSADDLTPSVTSH. The span at 154–163 shows a compositional bias: acidic residues; that stretch reads KESEIEDVET. Serine 156 carries the phosphoserine modification. Residue threonine 163 is modified to Phosphothreonine. A phosphoserine mark is found at serine 165 and serine 168. Positions 174 to 273 constitute an ELM2 domain; that stretch reads REIMIGLEYQ…EAIERYCCNG (100 aa). One can recognise an SANT domain in the interval 278-330; it reads EGMTAWTEEECRSFEHALMLHGKDFHLIQKDKVRSRTVAECVAFYYMWKKSER.

It is found in the nucleus. Functionally, transcriptional repressor. The sequence is that of Mesoderm induction early response protein 3 (Mier3) from Mus musculus (Mouse).